Reading from the N-terminus, the 531-residue chain is Zinc finger protein 692 (531 aa).

A compositionally biased stretch (basic and acidic residues) spans 155-178; sequence EAQGLECEQRERTQETRLSRRVDS. 2 disordered regions span residues 155-249 and 287-307; these read EAQG…PATL and MTESLESPGSQAQSAPNPTWD. The segment covering 186–206 has biased composition (acidic residues); sequence LGEDQDVEEEEEEEEEEEELL. A Phosphoserine modification is found at Ser-231. The span at 290–303 shows a compositional bias: polar residues; the sequence is SLESPGSQAQSAPN. C2H2-type zinc fingers lie at residues 327–352, 358–382, 388–410, 416–438, and 447–470; these read MPCDFPGCGRIFSNRQYLNHHKKYQH, FCCPEPACGKSFNFKKHLKEHVKLH, YICEFCARSFRTSSNLVIHRRIH, LQCEICGFTCRQKASLNWHRRKH, and FPCEFCGKRFEKPDSVVAHCSKSH. Ser-469 bears the Phosphoserine mark. Residues 474–531 form a disordered region; it reads LPAQEPPGSLVSSPSISAPESLQSPEGASISTTSDSNPASSTSISSPGVPDPRNREKS. The span at 483 to 499 shows a compositional bias: polar residues; the sequence is LVSSPSISAPESLQSPE. The span at 502 to 520 shows a compositional bias: low complexity; the sequence is SISTTSDSNPASSTSISSP.

The protein belongs to the krueppel C2H2-type zinc-finger protein family. Phosphorylation at Ser-469 results in loss of DNA-binding activity.

It localises to the nucleus. Its function is as follows. May act as an transcriptional repressor for PCK1 gene expression, in turn may participate in the hepatic gluconeogenesis regulation through the activated AMPK signaling pathway. This is Zinc finger protein 692 from Mus musculus (Mouse).